The chain runs to 833 residues: Leucine--tRNA ligase (833 aa).

Positions 41–52 (PYPSGAGLHVGH) match the 'HIGH' region motif. The short motif at 610–614 (KMSKS) is the 'KMSKS' region element. An ATP-binding site is contributed by Lys613.

The protein belongs to the class-I aminoacyl-tRNA synthetase family.

It localises to the cytoplasm. It catalyses the reaction tRNA(Leu) + L-leucine + ATP = L-leucyl-tRNA(Leu) + AMP + diphosphate. This is Leucine--tRNA ligase from Streptococcus pneumoniae serotype 4 (strain ATCC BAA-334 / TIGR4).